Consider the following 230-residue polypeptide: MSDDSSETRTGGRRGADAGLTERQRTILEVIRASVTSRGYPPSIREIGDAVGLTSTSSVAHQLRTLERKGYLRRDPNRPRAVDVRLSDEPATPVVTTDVAGSDALPEPTFVPVLGRIAAGGPILAEEAVEDVFPLPRELVGEGSLFLLKVVGDSMVDAAICDGDWVVVRQQAVADNGDIVAAMIDGEATVKTFKRSRGQVWLMPHNPAFEPIPGNDAAVLGKVVTVIRKI.

A disordered region spans residues 1 to 21 (MSDDSSETRTGGRRGADAGLT). The segment at residues 44–64 (IREIGDAVGLTSTSSVAHQLR) is a DNA-binding region (H-T-H motif). Active-site for autocatalytic cleavage activity residues include Ser-154 and Lys-191.

Belongs to the peptidase S24 family. Homodimer.

It catalyses the reaction Hydrolysis of Ala-|-Gly bond in repressor LexA.. Its function is as follows. Represses a number of genes involved in the response to DNA damage (SOS response), including recA and lexA. In the presence of single-stranded DNA, RecA interacts with LexA causing an autocatalytic cleavage which disrupts the DNA-binding part of LexA, leading to derepression of the SOS regulon and eventually DNA repair. The polypeptide is LexA repressor (Mycobacterium sp. (strain JLS)).